Consider the following 71-residue polypeptide: Large ribosomal subunit protein uL29 (71 aa).

It belongs to the universal ribosomal protein uL29 family.

The chain is Large ribosomal subunit protein uL29 from Rickettsia africae (strain ESF-5).